A 647-amino-acid chain; its full sequence is DNA polymerase subunit gamma-1 (647 aa).

A disordered region spans residues Glu116 to Gly147. A compositionally biased stretch (acidic residues) spans Gln127–Glu137.

The protein belongs to the DNA polymerase type-A family. As to quaternary structure, heterotrimer composed of a catalytic subunit and a homodimer of accessory subunits. Interacts with TTC3. Mg(2+) serves as cofactor.

Its subcellular location is the mitochondrion. It localises to the mitochondrion matrix. It is found in the mitochondrion nucleoid. The enzyme catalyses DNA(n) + a 2'-deoxyribonucleoside 5'-triphosphate = DNA(n+1) + diphosphate. Involved in the replication of mitochondrial DNA. Associates with mitochondrial DNA. The sequence is that of DNA polymerase subunit gamma-1 (POLG) from Gallus gallus (Chicken).